The sequence spans 418 residues: RuvB-like helicase 2 (418 aa).

Residue 65-72 (GDRGSGKT) coordinates ATP.

Belongs to the RuvB family. Component of the SWR1 chromatin remodeling complex, the INO80 chromatin remodeling complex, and of the R2TP complex.

The protein resides in the nucleus. It catalyses the reaction ATP + H2O = ADP + phosphate + H(+). Functionally, DNA helicase which participates in several chromatin remodeling complexes, including the SWR1 and the INO80 complexes. The SWR1 complex mediates the ATP-dependent exchange of histone H2A for the H2A variant HZT1 leading to transcriptional regulation of selected genes by chromatin remodeling. The INO80 complex remodels chromatin by shifting nucleosomes and is involved in DNA repair. Also involved in pre-rRNA processing. This is RuvB-like helicase 2 (RVB2) from Encephalitozoon cuniculi (strain GB-M1) (Microsporidian parasite).